The following is a 160-amino-acid chain: Type IV major fimbrial protein FimA (160 aa).

A propeptide spans 1 to 7 (leader sequence); the sequence is MKSLQKG. Phe-8 bears the N-methylphenylalanine mark. Residues 8 to 28 traverse the membrane as a helical segment; sequence FTLIELMIVVAIIGILAAFAI. A disulfide bridge links Cys-63 with Cys-106.

Belongs to the N-Me-Phe pilin family. In terms of assembly, the pili are polar flexible filaments of about 5.4 nanometers diameter and 2.5 micrometers average length; they consist of only a single polypeptide chain arranged in a helical configuration of five subunits per turn in the assembled pilus.

Its subcellular location is the fimbrium. The protein resides in the membrane. In terms of biological role, major component of the type IV fimbriae that plays an essential role in twitching motility, natural transformation, and protease secretion. This is Type IV major fimbrial protein FimA (fimA) from Dichelobacter nodosus (Bacteroides nodosus).